The primary structure comprises 862 residues: Taxadiene synthase (862 aa).

Mg(2+)-binding residues include Asp-613, Asp-617, Asn-757, Thr-761, and Glu-765. Residues 613–617 (DDMAD) carry the DDXXD motif motif.

This sequence belongs to the terpene synthase family. Mg(2+) serves as cofactor.

The catalysed reaction is (2E,6E,10E)-geranylgeranyl diphosphate = taxa-4(5),11(12)-diene + diphosphate. The protein operates within alkaloid biosynthesis; taxol biosynthesis; taxa-4(20),11-dien-5alpha-ol from geranylgeranyl diphosphate: step 1/2. Functionally, catalyzes the cyclization of the ubiquitous isoprenoid intermediate geranylgeranyl diphosphate to taxa-4,11-diene, the parent olefin with a taxane skeleton. The polypeptide is Taxadiene synthase (TDC1) (Taxus baccata (English yew)).